A 369-amino-acid chain; its full sequence is Capsid protein (369 aa).

Its subcellular location is the host nucleus. The protein localises to the virion. Self-assembles to form the virion icosahedral capsid. This Avon-Heathcote Estuary associated kieseladnavirus (AHEaBV) protein is Capsid protein.